A 123-amino-acid chain; its full sequence is Small ribosomal subunit protein uS12 (123 aa).

The tract at residues 1–29 (MPTINQLVRKGRVPQKAKSKVPAMEQNPQ) is disordered. Basic residues predominate over residues 9-19 (RKGRVPQKAKS). Residue Asp89 is modified to 3-methylthioaspartic acid.

This sequence belongs to the universal ribosomal protein uS12 family. As to quaternary structure, part of the 30S ribosomal subunit. Contacts proteins S8 and S17. May interact with IF1 in the 30S initiation complex.

Its function is as follows. With S4 and S5 plays an important role in translational accuracy. Functionally, interacts with and stabilizes bases of the 16S rRNA that are involved in tRNA selection in the A site and with the mRNA backbone. Located at the interface of the 30S and 50S subunits, it traverses the body of the 30S subunit contacting proteins on the other side and probably holding the rRNA structure together. The combined cluster of proteins S8, S12 and S17 appears to hold together the shoulder and platform of the 30S subunit. The protein is Small ribosomal subunit protein uS12 of Erythrobacter litoralis (strain HTCC2594).